A 117-amino-acid polypeptide reads, in one-letter code: Ribosome-binding factor A (117 aa).

Belongs to the RbfA family. As to quaternary structure, monomer. Binds 30S ribosomal subunits, but not 50S ribosomal subunits or 70S ribosomes.

The protein resides in the cytoplasm. One of several proteins that assist in the late maturation steps of the functional core of the 30S ribosomal subunit. Associates with free 30S ribosomal subunits (but not with 30S subunits that are part of 70S ribosomes or polysomes). Required for efficient processing of 16S rRNA. May interact with the 5'-terminal helix region of 16S rRNA. The polypeptide is Ribosome-binding factor A (Nitrosomonas eutropha (strain DSM 101675 / C91 / Nm57)).